Reading from the N-terminus, the 403-residue chain is Phosphopentomutase (403 aa).

D13, D298, H303, D339, H340, and H351 together coordinate Mn(2+).

This sequence belongs to the phosphopentomutase family. Mn(2+) is required as a cofactor.

It is found in the cytoplasm. The enzyme catalyses 2-deoxy-alpha-D-ribose 1-phosphate = 2-deoxy-D-ribose 5-phosphate. It catalyses the reaction alpha-D-ribose 1-phosphate = D-ribose 5-phosphate. It functions in the pathway carbohydrate degradation; 2-deoxy-D-ribose 1-phosphate degradation; D-glyceraldehyde 3-phosphate and acetaldehyde from 2-deoxy-alpha-D-ribose 1-phosphate: step 1/2. In terms of biological role, isomerase that catalyzes the conversion of deoxy-ribose 1-phosphate (dRib-1-P) and ribose 1-phosphate (Rib-1-P) to deoxy-ribose 5-phosphate (dRib-5-P) and ribose 5-phosphate (Rib-5-P), respectively. The sequence is that of Phosphopentomutase from Streptococcus mutans serotype c (strain ATCC 700610 / UA159).